The following is a 460-amino-acid chain: Muscarinic acetylcholine receptor M1 (460 aa).

Residues 1–22 are Extracellular-facing; that stretch reads MNTSAPPAVSPNITVLAPGKGP. N2 and N12 each carry an N-linked (GlcNAc...) asparagine glycan. Residues 23 to 48 form a helical membrane-spanning segment; sequence WQVAFIGITTGLLSLATVTGNLLVLI. Residues 49 to 62 are Cytoplasmic-facing; it reads SFKVNTELKTVNNY. A helical transmembrane segment spans residues 63-84; it reads FLLSLACADLIIGTFSMNLYTT. The Extracellular segment spans residues 85–95; that stretch reads YLLMGHWALGT. The chain crosses the membrane as a helical span at residues 96–121; that stretch reads LACDLWLALDYVASNASVMNLLLISF. An intrachain disulfide couples C98 to C178. Residues 122–142 lie on the Cytoplasmic side of the membrane; sequence DRYFSVTRPLSYRAKRTPRRA. A helical membrane pass occupies residues 143 to 164; it reads ALMIGLAWLVSFVLWAPAILFW. Residues 165-185 lie on the Extracellular side of the membrane; that stretch reads QYLVGERTVLAGQCYIQFLSQ. A helical transmembrane segment spans residues 186–209; the sequence is PIITFGTAMAAFYLPVTVMCTLYW. The Cytoplasmic segment spans residues 210 to 366; sequence RIYRETESRA…LVKEKKAART (157 aa). 3 disordered regions span residues 225-256, 274-297, and 310-351; these read LQGS…GTPP, WKEE…EEPG, and EAQA…QLAK. The residue at position 230 (T230) is a Phosphothreonine. Residues 238-247 are compositionally biased toward low complexity; the sequence is SSSSERSQPG. Residues 328–343 show a composition bias toward basic residues; sequence RPTKKGRDRAGKGQKP. A helical transmembrane segment spans residues 367-390; that stretch reads LSAILLAFILTWTPYNIMVLVSTF. Topologically, residues 391-397 are extracellular; the sequence is CKDCVPE. Residues 398–420 form a helical membrane-spanning segment; that stretch reads TLWELGYWLCYVNSTINPMCYAL. At 421 to 460 the chain is on the cytoplasmic side; that stretch reads CNKAFRDTFRLLLLCRWDKRRWRKIPKRPGSVHRTPSRQC. T428 bears the Phosphothreonine mark. S451 bears the Phosphoserine mark. T455 carries the phosphothreonine modification. Position 457 is a phosphoserine (S457).

This sequence belongs to the G-protein coupled receptor 1 family. Muscarinic acetylcholine receptor subfamily. CHRM1 sub-subfamily. Interacts with GPRASP2. Interacts with TMEM147.

It is found in the cell membrane. The protein resides in the postsynaptic cell membrane. Its function is as follows. The muscarinic acetylcholine receptor mediates various cellular responses, including inhibition of adenylate cyclase, breakdown of phosphoinositides and modulation of potassium channels through the action of G proteins. Primary transducing effect is Pi turnover. This chain is Muscarinic acetylcholine receptor M1 (CHRM1), found in Pongo abelii (Sumatran orangutan).